The following is a 256-amino-acid chain: uncharacterized protein (256 aa).

4 helical membrane-spanning segments follow: residues 5–25 (FIEG…NYLL), 30–50 (ILST…LKVF), 64–84 (VVIF…DPAI), and 105–125 (VGIT…LGII). Residues 198-256 (EKTKSLDSISHSSSSSRKSSTELKIPPVETRIVAEIPVPSSVKRRRHRPNKSMGSIKNS) form a disordered region. Over residues 203-215 (LDSISHSSSSSRK) the composition is skewed to low complexity. Residues Ser-210 and Ser-211 each carry the phosphoserine modification.

It localises to the endoplasmic reticulum membrane. Its subcellular location is the nucleus membrane. This is an uncharacterized protein from Schizosaccharomyces pombe (strain 972 / ATCC 24843) (Fission yeast).